We begin with the raw amino-acid sequence, 152 residues long: Protein Smg homolog (152 aa).

The protein belongs to the Smg family.

This is Protein Smg homolog from Bordetella petrii (strain ATCC BAA-461 / DSM 12804 / CCUG 43448).